Reading from the N-terminus, the 226-residue chain is Putative ABC transporter ATP-binding protein BQ02700 (226 aa).

One can recognise an ABC transporter domain in the interval isoleucine 4–methionine 225. Glycine 35–serine 42 serves as a coordination point for ATP.

The protein belongs to the ABC transporter superfamily.

Its subcellular location is the cell inner membrane. Probably part of an ABC transporter complex. Responsible for energy coupling to the transport system. The chain is Putative ABC transporter ATP-binding protein BQ02700 from Bartonella quintana (strain Toulouse) (Rochalimaea quintana).